A 95-amino-acid chain; its full sequence is Putative septation protein SpoVG (95 aa).

The protein belongs to the SpoVG family.

Its function is as follows. Could be involved in septation. The sequence is that of Putative septation protein SpoVG from Clostridium botulinum (strain ATCC 19397 / Type A).